The chain runs to 294 residues: Shikimate dehydrogenase (NADP(+)) (294 aa).

Residues 23–25 and threonine 76 contribute to the shikimate site; that span reads SRS. Lysine 80 (proton acceptor) is an active-site residue. The shikimate site is built by asparagine 101 and aspartate 116. Residues 141 to 145 and methionine 233 contribute to the NADP(+) site; that span reads GAGGA. Tyrosine 235 serves as a coordination point for shikimate. Glycine 256 lines the NADP(+) pocket.

This sequence belongs to the shikimate dehydrogenase family. In terms of assembly, homodimer.

The enzyme catalyses shikimate + NADP(+) = 3-dehydroshikimate + NADPH + H(+). It functions in the pathway metabolic intermediate biosynthesis; chorismate biosynthesis; chorismate from D-erythrose 4-phosphate and phosphoenolpyruvate: step 4/7. Functionally, involved in the biosynthesis of the chorismate, which leads to the biosynthesis of aromatic amino acids. Catalyzes the reversible NADPH linked reduction of 3-dehydroshikimate (DHSA) to yield shikimate (SA). The protein is Shikimate dehydrogenase (NADP(+)) of Methylibium petroleiphilum (strain ATCC BAA-1232 / LMG 22953 / PM1).